The chain runs to 162 residues: Protein-export protein SecB (162 aa).

This sequence belongs to the SecB family. Homotetramer, a dimer of dimers. One homotetramer interacts with 1 SecA dimer.

It localises to the cytoplasm. One of the proteins required for the normal export of preproteins out of the cell cytoplasm. It is a molecular chaperone that binds to a subset of precursor proteins, maintaining them in a translocation-competent state. It also specifically binds to its receptor SecA. The sequence is that of Protein-export protein SecB from Legionella pneumophila (strain Paris).